The primary structure comprises 1235 residues: DNA polymerase catalytic subunit (1235 aa).

Disordered regions lie at residues glutamine 640–arginine 692 and alanine 1098–proline 1134. A compositionally biased stretch (basic and acidic residues) spans alanine 650–glutamate 661. Acidic residues predominate over residues glutamate 662–glutamate 675. Positions glutamate 676–glycine 691 are enriched in basic and acidic residues.

It belongs to the DNA polymerase type-B family. In terms of assembly, forms a complex with the ssDNA-binding protein UL29, the DNA polymerase processivity factor, and the alkaline exonuclease. Interacts with the putative helicase-primase complex subunit UL8; this interaction may coordinate leading and lagging strand DNA synthesis at the replication fork.

Its subcellular location is the host nucleus. The enzyme catalyses DNA(n) + a 2'-deoxyribonucleoside 5'-triphosphate = DNA(n+1) + diphosphate. It catalyses the reaction Endonucleolytic cleavage to 5'-phosphomonoester.. In terms of biological role, replicates viral genomic DNA. The replication complex is composed of six viral proteins: the DNA polymerase, processivity factor, primase, primase-associated factor, helicase, and ssDNA-binding protein. Additionally, the polymerase contains an intrinsic ribonuclease H (RNase H) activity that specifically degrades RNA/DNA heteroduplexes or duplex DNA substrates in the 5' to 3' direction. Therefore, it can catalyze the excision of the RNA primers that initiate the synthesis of Okazaki fragments at a replication fork during viral DNA replication. The sequence is that of DNA polymerase catalytic subunit from Human herpesvirus 1 (strain Angelotti) (HHV-1).